Here is a 113-residue protein sequence, read N- to C-terminus: MRYVAAYLLAVLGGKDSPANSDLEKILSSVGVEVDAERLTKVIKELAGKSIDDLIKEGREKLSSMPVGGGGAVAAADAAPAAAAGGDKKEAKKEEKKEESESEDDDMGFALFE.

The interval 66–113 (PVGGGGAVAAADAAPAAAAGGDKKEAKKEEKKEESESEDDDMGFALFE) is disordered. The span at 73-85 (VAAADAAPAAAAG) shows a compositional bias: low complexity. Residues 86-99 (GDKKEAKKEEKKEE) are compositionally biased toward basic and acidic residues. Ser100 and Ser102 each carry phosphoserine.

This sequence belongs to the eukaryotic ribosomal protein P1/P2 family. As to quaternary structure, P1 and P2 exist as dimers at the large ribosomal subunit.

In terms of biological role, plays an important role in the elongation step of protein synthesis. This Drosophila melanogaster (Fruit fly) protein is Large ribosomal subunit protein P2 (RpLP2).